The chain runs to 390 residues: UPF0496 protein At1g20180 (390 aa).

The next 2 membrane-spanning stretches (helical) occupy residues 228 to 248 and 250 to 270; these read LGGY…LIIA and HSIL…FCLL.

This sequence belongs to the UPF0496 family.

The protein localises to the membrane. This chain is UPF0496 protein At1g20180, found in Arabidopsis thaliana (Mouse-ear cress).